Reading from the N-terminus, the 430-residue chain is MELLHSINDFNEAKQVIAGGVNSPVRAFKSVKGTPPFILKGKGAYLYDVDNNHYIDFVQSWGPLIFGHADEEIEENIINALKKGTSFGAPTELETTLAKEIISCYEGLDKVRLVSSGTEATMSAIRLARAYSQKDDLIKFEGCYHGHSDSLLVKAGSGCATFGSPSSLGVPNDFSKHTLVARYNDLNSTEECFKKGNVGCVIIEPIAGNMGLVPAQKEFLLGLKALCEKYQAVLILDEVMSGFRASLSGSQEFYGVVPDLVTFGKVIGAGLPLACFGGRAEIMDLLSPIGSVYQAGTLSGNPLAVCAGLSALYKIKRDKTLYTRLDALAIRLTQGLQKSAQNYNIALETLNMGSMFGFFFNENAVHDFDDALKSDTEMFAKFHQKMLFKGVYLACSSFETGFICEPMTEEMIDLTIAKADESFDEIIKGV.

Residue lysine 265 is modified to N6-(pyridoxal phosphate)lysine.

It belongs to the class-III pyridoxal-phosphate-dependent aminotransferase family. HemL subfamily. In terms of assembly, homodimer. Pyridoxal 5'-phosphate is required as a cofactor.

It is found in the cytoplasm. It catalyses the reaction (S)-4-amino-5-oxopentanoate = 5-aminolevulinate. It participates in porphyrin-containing compound metabolism; protoporphyrin-IX biosynthesis; 5-aminolevulinate from L-glutamyl-tRNA(Glu): step 2/2. This Helicobacter pylori (strain ATCC 700392 / 26695) (Campylobacter pylori) protein is Glutamate-1-semialdehyde 2,1-aminomutase (hemL).